Reading from the N-terminus, the 119-residue chain is Protein TusC (119 aa).

It belongs to the DsrF/TusC family. Heterohexamer, formed by a dimer of trimers. The hexameric TusBCD complex contains 2 copies each of TusB, TusC and TusD. The TusBCD complex interacts with TusE.

It is found in the cytoplasm. Part of a sulfur-relay system required for 2-thiolation of 5-methylaminomethyl-2-thiouridine (mnm(5)s(2)U) at tRNA wobble positions. The chain is Protein TusC from Shigella flexneri serotype 5b (strain 8401).